A 121-amino-acid chain; its full sequence is Large ribosomal subunit protein uL14 (121 aa).

This sequence belongs to the universal ribosomal protein uL14 family. In terms of assembly, part of the 50S ribosomal subunit. Forms a cluster with proteins L3 and L19. In the 70S ribosome, L14 and L19 interact and together make contacts with the 16S rRNA in bridges B5 and B8.

Its function is as follows. Binds to 23S rRNA. Forms part of two intersubunit bridges in the 70S ribosome. The sequence is that of Large ribosomal subunit protein uL14 from Prochlorococcus marinus (strain MIT 9303).